A 297-amino-acid polypeptide reads, in one-letter code: Mycothiol acetyltransferase (297 aa).

Position 35 (E35) interacts with 1D-myo-inositol 2-(L-cysteinylamino)-2-deoxy-alpha-D-glucopyranoside. 73-75 (MLV) contacts acetyl-CoA. The N-acetyltransferase domain maps to 155–297 (LRTFGGTEAE…VAVHAQYGIP (143 aa)). Positions 181, 222, and 230 each coordinate 1D-myo-inositol 2-(L-cysteinylamino)-2-deoxy-alpha-D-glucopyranoside. Acetyl-CoA is bound by residues 234–236 (LGV) and 241–247 (QGRGLGR). Residue Y268 participates in 1D-myo-inositol 2-(L-cysteinylamino)-2-deoxy-alpha-D-glucopyranoside binding.

This sequence belongs to the acetyltransferase family. MshD subfamily. Monomer.

The catalysed reaction is 1D-myo-inositol 2-(L-cysteinylamino)-2-deoxy-alpha-D-glucopyranoside + acetyl-CoA = mycothiol + CoA + H(+). Catalyzes the transfer of acetyl from acetyl-CoA to desacetylmycothiol (Cys-GlcN-Ins) to form mycothiol. The chain is Mycothiol acetyltransferase from Beutenbergia cavernae (strain ATCC BAA-8 / DSM 12333 / CCUG 43141 / JCM 11478 / NBRC 16432 / NCIMB 13614 / HKI 0122).